Reading from the N-terminus, the 152-residue chain is Toxin Res (152 aa).

It belongs to the MbcT/ParT/Res family. As to quaternary structure, homodimer. Forms a complex with cognate antitoxin Xre.

Toxic component of a type II toxin-antitoxin (TA) system. Expression in E.coli inhibits cell growth; bacteriostasis is neutralized by expression of cognate antitoxin Xre. Probably depletes intracellular NAD(+). The polypeptide is Toxin Res (Yersinia enterocolitica serotype O:8 / biotype 1B (strain NCTC 13174 / 8081)).